We begin with the raw amino-acid sequence, 393 residues long: S-adenosylmethionine synthase (393 aa).

Position 16 (His16) interacts with ATP. Asp18 serves as a coordination point for Mg(2+). A K(+)-binding site is contributed by Glu44. 2 residues coordinate L-methionine: Glu57 and Gln100. Residues 100-110 (QSNDIAQGVDH) form a flexible loop region. Residues 167-169 (DAK), 238-239 (RF), Asp247, 253-254 (RK), Ala270, and Lys274 each bind ATP. Asp247 serves as a coordination point for L-methionine. Lys278 provides a ligand contact to L-methionine.

It belongs to the AdoMet synthase family. Homotetramer; dimer of dimers. Requires Mg(2+) as cofactor. It depends on K(+) as a cofactor.

Its subcellular location is the cytoplasm. It carries out the reaction L-methionine + ATP + H2O = S-adenosyl-L-methionine + phosphate + diphosphate. The protein operates within amino-acid biosynthesis; S-adenosyl-L-methionine biosynthesis; S-adenosyl-L-methionine from L-methionine: step 1/1. Functionally, catalyzes the formation of S-adenosylmethionine (AdoMet) from methionine and ATP. The overall synthetic reaction is composed of two sequential steps, AdoMet formation and the subsequent tripolyphosphate hydrolysis which occurs prior to release of AdoMet from the enzyme. This is S-adenosylmethionine synthase from Albidiferax ferrireducens (strain ATCC BAA-621 / DSM 15236 / T118) (Rhodoferax ferrireducens).